The following is a 321-amino-acid chain: Quinol oxidase subunit 2 (321 aa).

Positions 1-25 (MIFLFRALKPLLVLALLTVVFVLGG) are cleaved as a signal peptide. C26 is lipidated: N-palmitoyl cysteine. C26 carries S-diacylglycerol cysteine lipidation. 2 helical membrane passes run 49–69 (SIGF…IILV) and 90–110 (TFLE…LSVP). Residues 294-321 (QAVSPHSKTDPFENVKENEFKKSDDTEE) form a disordered region. Over residues 300 to 321 (SKTDPFENVKENEFKKSDDTEE) the composition is skewed to basic and acidic residues.

This sequence belongs to the cytochrome c oxidase subunit 2 family.

It localises to the cell membrane. It catalyses the reaction 2 a quinol + O2 = 2 a quinone + 2 H2O. Functionally, catalyzes quinol oxidation with the concomitant reduction of oxygen to water. Major component for energy conversion during vegetative growth. Subunit II transfers the electrons from a quinol to the binuclear center of the catalytic subunit I. This Bacillus spizizenii (strain ATCC 23059 / NRRL B-14472 / W23) (Bacillus subtilis subsp. spizizenii) protein is Quinol oxidase subunit 2 (qoxA).